The primary structure comprises 367 residues: NADH-quinone oxidoreductase subunit D (367 aa).

The protein belongs to the complex I 49 kDa subunit family. As to quaternary structure, NDH-1 is composed of 14 different subunits. Subunits NuoB, C, D, E, F, and G constitute the peripheral sector of the complex.

It is found in the cell inner membrane. It catalyses the reaction a quinone + NADH + 5 H(+)(in) = a quinol + NAD(+) + 4 H(+)(out). Its function is as follows. NDH-1 shuttles electrons from NADH, via FMN and iron-sulfur (Fe-S) centers, to quinones in the respiratory chain. The immediate electron acceptor for the enzyme in this species is believed to be ubiquinone. Couples the redox reaction to proton translocation (for every two electrons transferred, four hydrogen ions are translocated across the cytoplasmic membrane), and thus conserves the redox energy in a proton gradient. The protein is NADH-quinone oxidoreductase subunit D of Thermosipho melanesiensis (strain DSM 12029 / CIP 104789 / BI429).